Here is a 224-residue protein sequence, read N- to C-terminus: Putative adhesin A1E_05320 (224 aa).

The first 22 residues, 1–22 (MKKLLLIAATSATMLSSTLSFA), serve as a signal peptide directing secretion.

The polypeptide is Putative adhesin A1E_05320 (Rickettsia canadensis (strain McKiel)).